A 261-amino-acid polypeptide reads, in one-letter code: uncharacterized protein (261 aa).

The protein localises to the plastid. Its subcellular location is the chloroplast. This is an uncharacterized protein from Mesostigma viride (Green alga).